Consider the following 271-residue polypeptide: Pyrroline-5-carboxylate reductase (271 aa).

The protein belongs to the pyrroline-5-carboxylate reductase family.

It is found in the cytoplasm. It carries out the reaction L-proline + NADP(+) = (S)-1-pyrroline-5-carboxylate + NADPH + 2 H(+). The enzyme catalyses L-proline + NAD(+) = (S)-1-pyrroline-5-carboxylate + NADH + 2 H(+). It functions in the pathway amino-acid biosynthesis; L-proline biosynthesis; L-proline from L-glutamate 5-semialdehyde: step 1/1. Functionally, catalyzes the reduction of 1-pyrroline-5-carboxylate (PCA) to L-proline. This is Pyrroline-5-carboxylate reductase from Staphylococcus aureus (strain Mu50 / ATCC 700699).